The primary structure comprises 245 residues: 8-amino-3,8-dideoxy-manno-octulosonate cytidylyltransferase (245 aa).

It belongs to the KdsB family.

The protein resides in the cytoplasm. It carries out the reaction 8-amino-3,8-dideoxy-alpha-D-manno-octulosonate + CTP = CMP-8-amino-3,8-dideoxy-alpha-D-manno-oct-2-ulosonate + diphosphate. It functions in the pathway bacterial outer membrane biogenesis; lipopolysaccharide biosynthesis. In terms of biological role, activates KDO8N (a required 8-carbon sugar) for incorporation into bacterial lipopolysaccharide in the Shewanella genus. The sequence is that of 8-amino-3,8-dideoxy-manno-octulosonate cytidylyltransferase from Shewanella amazonensis (strain ATCC BAA-1098 / SB2B).